Reading from the N-terminus, the 237-residue chain is Orotate phosphoribosyltransferase (237 aa).

Lysine 29 provides a ligand contact to 5-phospho-alpha-D-ribose 1-diphosphate. Orotate is bound at residue 37 to 38; the sequence is FF. 5-phospho-alpha-D-ribose 1-diphosphate-binding positions include 79-80, arginine 105, lysine 106, lysine 109, histidine 111, and 130-138; these read YK and DDVMSAGTA. Orotate-binding residues include serine 134 and arginine 162.

Belongs to the purine/pyrimidine phosphoribosyltransferase family. PyrE subfamily. In terms of assembly, homodimer. The cofactor is Mg(2+).

The catalysed reaction is orotidine 5'-phosphate + diphosphate = orotate + 5-phospho-alpha-D-ribose 1-diphosphate. It participates in pyrimidine metabolism; UMP biosynthesis via de novo pathway; UMP from orotate: step 1/2. In terms of biological role, catalyzes the transfer of a ribosyl phosphate group from 5-phosphoribose 1-diphosphate to orotate, leading to the formation of orotidine monophosphate (OMP). In Polaromonas naphthalenivorans (strain CJ2), this protein is Orotate phosphoribosyltransferase.